The primary structure comprises 501 residues: ATP synthase subunit alpha, chloroplastic (501 aa).

170 to 177 (GDRQTGKT) contacts ATP.

This sequence belongs to the ATPase alpha/beta chains family. As to quaternary structure, F-type ATPases have 2 components, CF(1) - the catalytic core - and CF(0) - the membrane proton channel. CF(1) has five subunits: alpha(3), beta(3), gamma(1), delta(1), epsilon(1). CF(0) has four main subunits: a, b, b' and c.

Its subcellular location is the plastid. The protein localises to the chloroplast thylakoid membrane. The enzyme catalyses ATP + H2O + 4 H(+)(in) = ADP + phosphate + 5 H(+)(out). Produces ATP from ADP in the presence of a proton gradient across the membrane. The alpha chain is a regulatory subunit. The protein is ATP synthase subunit alpha, chloroplastic of Nephroselmis olivacea (Green alga).